We begin with the raw amino-acid sequence, 101 residues long: Thrombin-like enzyme okinaxobin-1 (101 aa).

Residues 1–16 form the signal peptide; it reads LIRVLANLLILQLSYA. The propeptide occupies 17–22; sequence QKSSEL. The Peptidase S1 domain maps to 23 to 101; it reads VIGGDECNIN…PKKKYFFRCR (79 aa). An intrachain disulfide couples cysteine 50 to cysteine 66. Residue histidine 65 is the Charge relay system of the active site.

It belongs to the peptidase S1 family. Snake venom subfamily. Monomer. In terms of processing, glycosylated. In terms of tissue distribution, expressed by the venom gland.

Its subcellular location is the secreted. Its activity is regulated as follows. Strongly inactivated by diisopropylfluorophosphate (DFP) and phenylmethanesulfonyl fluoride (PMSF), and to a lesser extent by tosyl-L-lysine chloromethyl ketone (TLCK). Its function is as follows. Thrombin-like snake venom serine protease that releases specifically fibrinopeptide B from fibrinogen (FGB) to form fibrin clots. Shows a preferential cleavage at Arg-|-Gly bonds in fibrinogen beta chains. Cleaves fibrinogen beta chains preferentially to alpha chains. The polypeptide is Thrombin-like enzyme okinaxobin-1 (Ovophis okinavensis (Ryukyu Island pit viper)).